A 58-amino-acid chain; its full sequence is Small ribosomal subunit protein bS21 (58 aa).

The tract at residues 39-58 (DKPSVKKRAKSKAAAKYRSR) is disordered. Residues 43 to 58 (VKKRAKSKAAAKYRSR) show a composition bias toward basic residues.

The protein belongs to the bacterial ribosomal protein bS21 family.

The sequence is that of Small ribosomal subunit protein bS21 (rpsU) from Chlamydia pneumoniae (Chlamydophila pneumoniae).